The following is a 293-amino-acid chain: Nucleotide-binding protein BCG9842_B5683 (293 aa).

14–21 serves as a coordination point for ATP; that stretch reads GMSGAGKT. Residue 65 to 68 coordinates GTP; it reads DLRG.

It belongs to the RapZ-like family.

Functionally, displays ATPase and GTPase activities. The protein is Nucleotide-binding protein BCG9842_B5683 of Bacillus cereus (strain G9842).